A 397-amino-acid chain; its full sequence is UPF0261 protein mlr3387 (397 aa).

Belongs to the UPF0261 family.

The sequence is that of UPF0261 protein mlr3387 from Mesorhizobium japonicum (strain LMG 29417 / CECT 9101 / MAFF 303099) (Mesorhizobium loti (strain MAFF 303099)).